A 162-amino-acid chain; its full sequence is MATLQSLADLGQANKAALGTAENEAPVHVQKLDAHGRAYATGKRKDAVARVWIKPGSGVITVNDRPVETYFARPVLRMILQQPLQVANRADQYDIVVTVTGGGLSGQAGAVRHGLAKALTHYEPELRSPLKREGFLTRDPRVVERKKYGRKKARRSFQFSKR.

This sequence belongs to the universal ribosomal protein uS9 family.

The protein is Small ribosomal subunit protein uS9 of Methylobacterium sp. (strain 4-46).